Reading from the N-terminus, the 144-residue chain is Large ribosomal subunit protein uL15 (144 aa).

Positions 1 to 53 (MRLNTLSPAEGAKHSAKRLGRGIGSGLGKTGGRGHKGQKSRTGGGVRRGFEGG) are disordered. A compositionally biased stretch (gly residues) spans 21–31 (RGIGSGLGKTG).

It belongs to the universal ribosomal protein uL15 family. Part of the 50S ribosomal subunit.

Binds to the 23S rRNA. The chain is Large ribosomal subunit protein uL15 from Pasteurella multocida (strain Pm70).